The chain runs to 335 residues: Holliday junction branch migration complex subunit RuvB (335 aa).

Residues 1 to 181 are large ATPase domain (RuvB-L); sequence MDRIVEIEKY…FGMQFRLEFY (181 aa). ATP-binding positions include L20, R21, G62, K65, T66, T67, 128–130, R171, Y181, and R218; that span reads EDY. Residue T66 coordinates Mg(2+). Residues 182–252 are small ATPAse domain (RuvB-S); sequence KDSELALILQ…RANEALNSLG (71 aa). Residues 255–335 form a head domain (RuvB-H) region; the sequence is ELGFDAMDLR…LNYEKTLFEE (81 aa). DNA is bound by residues R309 and R314.

The protein belongs to the RuvB family. As to quaternary structure, homohexamer. Forms an RuvA(8)-RuvB(12)-Holliday junction (HJ) complex. HJ DNA is sandwiched between 2 RuvA tetramers; dsDNA enters through RuvA and exits via RuvB. An RuvB hexamer assembles on each DNA strand where it exits the tetramer. Each RuvB hexamer is contacted by two RuvA subunits (via domain III) on 2 adjacent RuvB subunits; this complex drives branch migration. In the full resolvosome a probable DNA-RuvA(4)-RuvB(12)-RuvC(2) complex forms which resolves the HJ.

The protein localises to the cytoplasm. It carries out the reaction ATP + H2O = ADP + phosphate + H(+). Functionally, the RuvA-RuvB-RuvC complex processes Holliday junction (HJ) DNA during genetic recombination and DNA repair, while the RuvA-RuvB complex plays an important role in the rescue of blocked DNA replication forks via replication fork reversal (RFR). RuvA specifically binds to HJ cruciform DNA, conferring on it an open structure. The RuvB hexamer acts as an ATP-dependent pump, pulling dsDNA into and through the RuvAB complex. RuvB forms 2 homohexamers on either side of HJ DNA bound by 1 or 2 RuvA tetramers; 4 subunits per hexamer contact DNA at a time. Coordinated motions by a converter formed by DNA-disengaged RuvB subunits stimulates ATP hydrolysis and nucleotide exchange. Immobilization of the converter enables RuvB to convert the ATP-contained energy into a lever motion, pulling 2 nucleotides of DNA out of the RuvA tetramer per ATP hydrolyzed, thus driving DNA branch migration. The RuvB motors rotate together with the DNA substrate, which together with the progressing nucleotide cycle form the mechanistic basis for DNA recombination by continuous HJ branch migration. Branch migration allows RuvC to scan DNA until it finds its consensus sequence, where it cleaves and resolves cruciform DNA. The protein is Holliday junction branch migration complex subunit RuvB of Campylobacter jejuni (strain RM1221).